Consider the following 296-residue polypeptide: Thymidylate synthase (296 aa).

Residues Arg24 and 151–152 each bind dUMP; that span reads RR. Residue Cys171 is the Nucleophile of the active site. Residues 197 to 200, Asn208, and 238 to 240 contribute to the dUMP site; these read RSAD and HVY. Asp200 provides a ligand contact to (6R)-5,10-methylene-5,6,7,8-tetrahydrofolate.

This sequence belongs to the thymidylate synthase family. As to quaternary structure, homodimer.

The catalysed reaction is dUMP + (6R)-5,10-methylene-5,6,7,8-tetrahydrofolate = 7,8-dihydrofolate + dTMP. The protein operates within pyrimidine metabolism; dTTP biosynthesis. The protein is Thymidylate synthase (tms1) of Agaricus bisporus (White button mushroom).